Consider the following 144-residue polypeptide: Transcriptional regulator SlyA (144 aa).

One can recognise an HTH marR-type domain in the interval 2-135; sequence ESPLGSDLAR…LSNMIAKLEK (134 aa). Positions 49–72 form a DNA-binding region, H-T-H motif; sequence QIQLAKAIGIEQPSLVRTLDQLEE.

It belongs to the SlyA family. Homodimer.

Functionally, transcription regulator that can specifically activate or repress expression of target genes. The polypeptide is Transcriptional regulator SlyA (Sodalis glossinidius (strain morsitans)).